A 410-amino-acid chain; its full sequence is Digeranylgeranylglycerophospholipid reductase (410 aa).

FAD-binding residues include alanine 15, glutamate 34, valine 118, aspartate 286, glycine 298, and isoleucine 299. A 2,3-bis-O-(geranylgeranyl)-sn-glycerol 1-phospholipid contacts are provided by lysine 343 and alanine 379.

The protein belongs to the geranylgeranyl reductase family. DGGGPL reductase subfamily. FAD serves as cofactor.

The catalysed reaction is a 2,3-bis-O-phytanyl-sn-glycerol 1-phospholipid + 8 A = a 2,3-bis-O-(geranylgeranyl)-sn-glycerol 1-phospholipid + 8 AH2. The enzyme catalyses 2,3-bis-O-(phytanyl)-sn-glycerol 1-phosphate + 8 A = 2,3-bis-O-(geranylgeranyl)-sn-glycerol 1-phosphate + 8 AH2. It catalyses the reaction CDP-2,3-bis-O-(geranylgeranyl)-sn-glycerol + 8 AH2 = CDP-2,3-bis-O-(phytanyl)-sn-glycerol + 8 A. It carries out the reaction archaetidylserine + 8 AH2 = 2,3-bis-O-phytanyl-sn-glycero-3-phospho-L-serine + 8 A. It participates in membrane lipid metabolism; glycerophospholipid metabolism. Its function is as follows. Is involved in the reduction of 2,3-digeranylgeranylglycerophospholipids (unsaturated archaeols) into 2,3-diphytanylglycerophospholipids (saturated archaeols) in the biosynthesis of archaeal membrane lipids. Can fully reduce the unsaturated isoprenoid side chains of membrane phospholipids and glycolipids. Is also able to reduce the omega-position isoprene of dolichol phosphate. The sequence is that of Digeranylgeranylglycerophospholipid reductase from Haloferax volcanii (strain ATCC 29605 / DSM 3757 / JCM 8879 / NBRC 14742 / NCIMB 2012 / VKM B-1768 / DS2) (Halobacterium volcanii).